The following is a 192-amino-acid chain: Early nodulin-like protein 7 (192 aa).

The first 27 residues, 1–27, serve as a signal peptide directing secretion; sequence MMMMMMRSTCNLTLMLCICALVVASMA. A Phytocyanin domain is found at 32–134; that stretch reads RDFKVGDEFG…GQRLIVEVMH (103 aa). Asparagine 48, asparagine 89, and asparagine 101 each carry an N-linked (GlcNAc...) asparagine glycan. A disulfide bridge links cysteine 88 with cysteine 122. A lipid anchor (GPI-anchor amidated serine) is attached at serine 166. Positions 167 to 192 are cleaved as a propeptide — removed in mature form; it reads AASSLPTACLLIPLFLTIASFRFISY.

It belongs to the early nodulin-like (ENODL) family. As to expression, mostly expressed in flowers, and, to a lower extent, in seeds, but barely in seedlings, stems, leaves and roots.

It is found in the cell membrane. Its function is as follows. May act as a carbohydrate transporter. This Arabidopsis thaliana (Mouse-ear cress) protein is Early nodulin-like protein 7.